A 122-amino-acid chain; its full sequence is Large ribosomal subunit protein uL14 (122 aa).

The protein belongs to the universal ribosomal protein uL14 family. As to quaternary structure, part of the 50S ribosomal subunit. Forms a cluster with proteins L3 and L19. In the 70S ribosome, L14 and L19 interact and together make contacts with the 16S rRNA in bridges B5 and B8.

In terms of biological role, binds to 23S rRNA. Forms part of two intersubunit bridges in the 70S ribosome. This Methylobacterium radiotolerans (strain ATCC 27329 / DSM 1819 / JCM 2831 / NBRC 15690 / NCIMB 10815 / 0-1) protein is Large ribosomal subunit protein uL14.